Reading from the N-terminus, the 938-residue chain is AP-4 complex subunit epsilon (938 aa).

HEAT repeat units lie at residues 118-153 (DLII…INEE), 154-190 (TIPA…KSPS), 192-227 (VSHL…EDVN), 234-272 (SSFV…IMAL), 321-358 (KLLE…ISPD), 359-395 (IAEQ…SSNV), 397-431 (VIVD…QFAP), 454-495 (KVAH…EPKL), 517-556 (YSAS…FEIA), and 562-601 (DVLP…RAVE). Disordered regions lie at residues 690 to 712 (EPSY…RESS), 725 to 867 (WGRP…VMGL), 880 to 912 (VDSL…KEAL), and 919 to 938 (RQMG…DLLG). Residues 694–706 (YSESHQPISTSLV) are compositionally biased toward polar residues. A compositionally biased stretch (low complexity) spans 728–744 (PSYQSTTAASSTTPQAA). Basic and acidic residues predominate over residues 764–779 (SSYEPKKPEIDPEKQR). The segment covering 808 to 821 (ANKTATVPKENQTP) has biased composition (polar residues). 2 stretches are compositionally biased toward low complexity: residues 853–863 (DSSSQDGGSSD) and 880–891 (VDSLLSELSDSS). One copy of the HEAT 11 repeat lies at 874-911 (VTTTTSVDSLLSELSDSSKGNSRTYQPQTSKGPNTKEA). The segment covering 892 to 906 (KGNSRTYQPQTSKGP) has biased composition (polar residues).

It belongs to the adaptor complexes large subunit family. In terms of assembly, adaptor protein complex 4 (AP-4) is a heterotetramer composed of two large adaptins (epsilon-type subunit and beta-type subunit), a medium adaptin (mu-type subunit) and a small adaptin (sigma-type subunit).

Its subcellular location is the golgi apparatus. The protein resides in the trans-Golgi network. It localises to the membrane. The protein localises to the coated pit. Its function is as follows. Subunit of novel type of clathrin- or non-clathrin-associated protein coat involved in targeting proteins from the trans-Golgi network (TGN) to the endosomal-lysosomal system. The sequence is that of AP-4 complex subunit epsilon from Arabidopsis thaliana (Mouse-ear cress).